We begin with the raw amino-acid sequence, 619 residues long: Guanylate cyclase soluble subunit beta-1 (619 aa).

H105 provides a ligand contact to heme. One can recognise a Guanylate cyclase domain in the interval 421–554 (TILFSGIVGF…NTVNLTSRTE (134 aa)).

This sequence belongs to the adenylyl cyclase class-4/guanylyl cyclase family. In terms of assembly, the active enzyme is formed by a heterodimer of an alpha and a beta subunit. Heterodimer with GUCY1A1. Can also form inactive homodimers in vitro. Heme serves as cofactor. In terms of tissue distribution, lung and brain.

It is found in the cytoplasm. It catalyses the reaction GTP = 3',5'-cyclic GMP + diphosphate. Its activity is regulated as follows. Activated by nitric oxide in the presence of magnesium or manganese ions, binding of NO to the heme iron increases catalytic activity up to 400 folds. In terms of biological role, mediates responses to nitric oxide (NO) by catalyzing the biosynthesis of the signaling molecule cGMP. The polypeptide is Guanylate cyclase soluble subunit beta-1 (GUCY1B1) (Bos taurus (Bovine)).